The following is a 495-amino-acid chain: Aspartyl/glutamyl-tRNA(Asn/Gln) amidotransferase subunit B (495 aa).

This sequence belongs to the GatB/GatE family. GatB subfamily. Heterotrimer of A, B and C subunits.

The catalysed reaction is L-glutamyl-tRNA(Gln) + L-glutamine + ATP + H2O = L-glutaminyl-tRNA(Gln) + L-glutamate + ADP + phosphate + H(+). It carries out the reaction L-aspartyl-tRNA(Asn) + L-glutamine + ATP + H2O = L-asparaginyl-tRNA(Asn) + L-glutamate + ADP + phosphate + 2 H(+). Its function is as follows. Allows the formation of correctly charged Asn-tRNA(Asn) or Gln-tRNA(Gln) through the transamidation of misacylated Asp-tRNA(Asn) or Glu-tRNA(Gln) in organisms which lack either or both of asparaginyl-tRNA or glutaminyl-tRNA synthetases. The reaction takes place in the presence of glutamine and ATP through an activated phospho-Asp-tRNA(Asn) or phospho-Glu-tRNA(Gln). The sequence is that of Aspartyl/glutamyl-tRNA(Asn/Gln) amidotransferase subunit B from Halobacterium salinarum (strain ATCC 700922 / JCM 11081 / NRC-1) (Halobacterium halobium).